We begin with the raw amino-acid sequence, 321 residues long: Beta-ketoacyl-[acyl-carrier-protein] synthase III (321 aa).

Active-site residues include C115 and H248. Residues 249 to 253 are ACP-binding; the sequence is QANIR. N278 is an active-site residue.

It belongs to the thiolase-like superfamily. FabH family. In terms of assembly, homodimer.

It localises to the cytoplasm. The catalysed reaction is malonyl-[ACP] + acetyl-CoA + H(+) = 3-oxobutanoyl-[ACP] + CO2 + CoA. Its pathway is lipid metabolism; fatty acid biosynthesis. Its function is as follows. Catalyzes the condensation reaction of fatty acid synthesis by the addition to an acyl acceptor of two carbons from malonyl-ACP. Catalyzes the first condensation reaction which initiates fatty acid synthesis and may therefore play a role in governing the total rate of fatty acid production. Possesses both acetoacetyl-ACP synthase and acetyl transacylase activities. Its substrate specificity determines the biosynthesis of branched-chain and/or straight-chain of fatty acids. The sequence is that of Beta-ketoacyl-[acyl-carrier-protein] synthase III from Aromatoleum aromaticum (strain DSM 19018 / LMG 30748 / EbN1) (Azoarcus sp. (strain EbN1)).